The chain runs to 431 residues: Enolase (431 aa).

Gln166 lines the (2R)-2-phosphoglycerate pocket. Glu208 serves as the catalytic Proton donor. Positions 245, 288, and 315 each coordinate Mg(2+). Residues Lys340, Arg369, Ser370, and Lys391 each coordinate (2R)-2-phosphoglycerate. Catalysis depends on Lys340, which acts as the Proton acceptor.

It belongs to the enolase family. It depends on Mg(2+) as a cofactor.

The protein resides in the cytoplasm. It localises to the secreted. It is found in the cell surface. The catalysed reaction is (2R)-2-phosphoglycerate = phosphoenolpyruvate + H2O. Its pathway is carbohydrate degradation; glycolysis; pyruvate from D-glyceraldehyde 3-phosphate: step 4/5. Its function is as follows. Catalyzes the reversible conversion of 2-phosphoglycerate (2-PG) into phosphoenolpyruvate (PEP). It is essential for the degradation of carbohydrates via glycolysis. The chain is Enolase from Clostridium botulinum (strain Loch Maree / Type A3).